Consider the following 152-residue polypeptide: SsrA-binding protein (152 aa).

It belongs to the SmpB family.

The protein resides in the cytoplasm. Required for rescue of stalled ribosomes mediated by trans-translation. Binds to transfer-messenger RNA (tmRNA), required for stable association of tmRNA with ribosomes. tmRNA and SmpB together mimic tRNA shape, replacing the anticodon stem-loop with SmpB. tmRNA is encoded by the ssrA gene; the 2 termini fold to resemble tRNA(Ala) and it encodes a 'tag peptide', a short internal open reading frame. During trans-translation Ala-aminoacylated tmRNA acts like a tRNA, entering the A-site of stalled ribosomes, displacing the stalled mRNA. The ribosome then switches to translate the ORF on the tmRNA; the nascent peptide is terminated with the 'tag peptide' encoded by the tmRNA and targeted for degradation. The ribosome is freed to recommence translation, which seems to be the essential function of trans-translation. The protein is SsrA-binding protein of Lactobacillus helveticus (strain DPC 4571).